Consider the following 850-residue polypeptide: Protein argonaute 8 (850 aa).

The interval 1–30 (MDTTLPPPQHMEREPLKSKSSLLPMTRRGN) is disordered. The PAZ domain occupies 247–361 (PVVDFLIANQ…FPIELCELVS (115 aa)). The Piwi domain occupies 518-811 (QSILGEVPPK…AAAQMATAMK (294 aa)).

It belongs to the argonaute family. Ago subfamily.

In terms of biological role, involved in RNA-mediated post-transcriptional gene silencing (PTGS). Main component of the RNA-induced silencing complex (RISC) that binds to a short guide RNA such as a microRNA (miRNA) or small interfering RNA (siRNA). RISC uses the mature miRNA or siRNA as a guide for slicer-directed cleavage of homologous mRNAs to repress gene expression. The polypeptide is Protein argonaute 8 (AGO8) (Arabidopsis thaliana (Mouse-ear cress)).